Consider the following 211-residue polypeptide: ATP phosphoribosyltransferase (211 aa).

It belongs to the ATP phosphoribosyltransferase family. Short subfamily. In terms of assembly, heteromultimer composed of HisG and HisZ subunits.

It is found in the cytoplasm. The enzyme catalyses 1-(5-phospho-beta-D-ribosyl)-ATP + diphosphate = 5-phospho-alpha-D-ribose 1-diphosphate + ATP. The protein operates within amino-acid biosynthesis; L-histidine biosynthesis; L-histidine from 5-phospho-alpha-D-ribose 1-diphosphate: step 1/9. Its function is as follows. Catalyzes the condensation of ATP and 5-phosphoribose 1-diphosphate to form N'-(5'-phosphoribosyl)-ATP (PR-ATP). Has a crucial role in the pathway because the rate of histidine biosynthesis seems to be controlled primarily by regulation of HisG enzymatic activity. This Bacillus thuringiensis subsp. konkukian (strain 97-27) protein is ATP phosphoribosyltransferase.